The chain runs to 521 residues: MLPTLPNIAGRINTMATFLLPVAIGTIILLFLYGKYVTSTLIPGPPTLPLIGNLHQLPSDDRRHVLAQWHKKHGPIISLKFGWSSVVILGNIAVTKELFGKRSLKYGSRPRMVMARDCMTKQMQTSTLPWGEKWKIHNRIQLSLVGGPKIRSYQSLLDIESCKVLYQLLSTESLVTCFNRFKFNIIYTLAYGKDPDQNESDFHEILELADHFTQTLTNATWVVDLFPILNCLPRRLAPWKAVGDDFHRRAMGWFRRNSEAAVKSNSWNWTKHVQFNEDTGNLSVSEMQYLIGVLFEAGVDSTATVLHFFVLACTLYPDAVTKARQELDKVVGSARLPTPKDLPQLPYVKAFIQEVLRWRPITAEGLPHFTLEDDKYQGYDIPKGSTVIFNYWSGHMDEDTYQHADQFCPERWIERPDLPLGVFGYGRRACAGRRLALMSLETLIPKLLWAFDFRSPAGTDHGKSRDPGTEHQGALIKPRSFPVSWHPVSNDRRLIIERLFQERDKDLDTVLDDIGKAFERY.

A helical transmembrane segment spans residues 14-34 (TMATFLLPVAIGTIILLFLYG). Asparagine 198, asparagine 218, asparagine 268, and asparagine 281 each carry an N-linked (GlcNAc...) asparagine glycan. Cysteine 430 contacts heme.

Belongs to the cytochrome P450 family. Requires heme as cofactor.

The protein localises to the membrane. It functions in the pathway secondary metabolite biosynthesis; terpenoid biosynthesis. In terms of biological role, cytochrome P450 monooxygenase; part of the gene cluster that mediates the biosynthesis of astellolides, drimane-type sesquiterpene esters that show antimicrobial, anti-inflammatory, and anti-tumor activities. The first step in astellolide biosynthesis is performed by the sesquiterpene cyclase astC that catalyzes the formation of drimanyl pyrophosphate from farnesyl pyrophosphate. Drimanyl pyrophosphate is then dephosphorylated by the sesquiterpene phosphatase astI to produce drimanyl monophosphate which is further dephosphorylated to drim-8-ene-11-ol by atsK. Drim-8-ene-11-ol is converted to confertifolin, probably by the cytochrome P450 monooxygenase astD and/or the dehydrogenase astE. The cytochrome P450 monooxygenases astB, astF and astJ then hydroxylate confertifolin at C6, C14, or C15 to form trihydroxy confertifolin. The nonribosomal peptide synthetase astA catalyzes ester bond formation between trihydroxy contifolin and benzoic acid (BA) or 4-hydroxy benzoic acid (4HBA), leading to the formation of dideacetyl astellolides A and B, respectively. Finally, the O-acetyltransferase astG converts dideacetyl astellolides A and B into deacetyl astellolides A and B. The sequence is that of Cytochrome P450 monooxygenase astF from Aspergillus oryzae (strain ATCC 42149 / RIB 40) (Yellow koji mold).